Consider the following 710-residue polypeptide: MDEHNVHHFWGISPAVDLGTLLPTGDGAADLPVDQPVRFLQVAPYDARHTLTTLSRACRHPALMRQLPPGQPACRLYVWEDSPEGLARHVLLAAVLLDGGVPAAQRGQLLLELHGNAVLRRRAAEYLDEKARQLESLFVGLAAGQPPPAGPEAEARGLAALAALLDLSLLKFQEKDLIVEALQRWRLPNPTSSTSTSAASASAAAAPYDMVAAWDGRCRKVYGERYDFRRNMVDWDYHMRLQPAGTPGCDPASGSIIHFHHFRHWRLHGVAHELRDSAYNSANRCRGEGGVGEFKDRTGRDVGRSVSAWGFWADVLNSPYHAFGTACEQPEFYRITNKQFVRTAVDVAEHNIAALLHELRTGRRLELGEGQEAHRAQAARGPTTLEDLTAAAEEAAAAASGAGAEAGAGAGPGGEAAAGASSSSGKEEAAAAAAAGKEQGQGEGQGEDWTAGSGSGAPGAGTGQAVAEGREGPGGPQDSDPAAAASTAAPAAAAAAASSSSTSVPTYSSGGRAQVAKAMAAAAAAAGAGAGAGAEASSSGAASAASAAPTAGASSGAADGKAAEAAAAPLDEAAREQMAAEEAAVRAAEAALDAAARQRAGRFRLVLVTGDLAKTLTGRAKYAGAFSGLSLGHRHTHMLEPQYKLAAAAAPGARLVAENARHVLQLSQEQAALFAAKMDELAAAGGWRPLPAAQRPPGITEAAAVYVRAA.

Positions 403–487 (GAEAGAGAGP…DSDPAAAAST (85 aa)) are disordered. Gly residues predominate over residues 404-416 (AEAGAGAGPGGEA). Residues 417 to 438 (AAGASSSSGKEEAAAAAAAGKE) show a composition bias toward low complexity. The span at 453-462 (SGSGAPGAGT) shows a compositional bias: gly residues. A compositionally biased stretch (low complexity) spans 478 to 487 (DSDPAAAAST).

It belongs to the DNAAF3 family.

It is found in the cytoplasm. Required for the assembly of axonemal inner and outer dynein arms. Involved in preassembly of dyneins into complexes before their transport into cilia. This is Dynein axonemal assembly factor 3 homolog (DAB1) from Chlamydomonas reinhardtii (Chlamydomonas smithii).